The chain runs to 476 residues: Monodehydroascorbate reductase 2, peroxisomal (476 aa).

The Cytoplasmic segment spans residues 1-3 (MGR). A helical transmembrane segment spans residues 4–24 (AFVHVILGGGVAAGYAALEFA). FAD contacts are provided by residues 12 to 15 (GGVA), glutamate 40, arginine 47, lysine 52, and 146 to 147 (RN). Over 25-447 (RRGGYSRGEL…GGLALGEKPT (423 aa)) the chain is Peroxisomal. NAD(+) is bound by residues 171-177 (GGYIGME), glutamate 195, arginine 201, and glycine 260. Position 173 to 177 (173 to 177 (YIGME)) interacts with NADP(+). Residues arginine 201 and glycine 260 each contribute to the NADP(+) site. Aspartate 297 contributes to the FAD binding site. An NAD(+)-binding site is contributed by 314-315 (EH). 314–315 (EH) contacts NADP(+). FAD is bound at residue valine 316. Arginine 320 is an L-ascorbate binding site. Tyrosine 346 contributes to the FAD binding site. NAD(+) is bound at residue tyrosine 346. Tyrosine 346 contacts NADP(+). Arginine 348 contacts L-ascorbate. Residues 448–468 (YVWHATAGVIAAASIAAFGYW) traverse the membrane as a helical segment. Residues 469-476 (YGRKRRRW) lie on the Cytoplasmic side of the membrane.

This sequence belongs to the FAD-dependent oxidoreductase family. The cofactor is FAD.

The protein resides in the peroxisome membrane. The catalysed reaction is 2 monodehydro-L-ascorbate radical + NADH + H(+) = 2 L-ascorbate + NAD(+). Catalyzes the conversion of monodehydroascorbate to ascorbate, oxidizing NADH in the process. Ascorbate is a major antioxidant against reactive oxygen species (ROS) and nitric oxide (NO). This chain is Monodehydroascorbate reductase 2, peroxisomal, found in Oryza sativa subsp. japonica (Rice).